A 245-amino-acid polypeptide reads, in one-letter code: SPX domain-containing protein 3 (245 aa).

The SPX domain occupies 1-142 (MKFGKRIKEQ…RGGLRSPFIQ (142 aa)).

Functionally, plays a positive role in plant adaptation to phosphate starvation and exerts negative feedback regulation of SPX1. The sequence is that of SPX domain-containing protein 3 (SPX3) from Arabidopsis thaliana (Mouse-ear cress).